Here is a 108-residue protein sequence, read N- to C-terminus: Transcriptional activator HlyU (108 aa).

Residues 13–107 form the HTH arsR-type domain; it reads EMEKNSAKAV…LLHRLYCQAN (95 aa). The H-T-H motif DNA-binding region spans 47-66; the sequence is VGELSSRLELSQSALSQHLA.

Up-regulates the expression of the hemolysin gene, hlyA, and may promote expression of other virulence determinants in vivo. It may have both positive and negative regulator activities. The protein is Transcriptional activator HlyU (hlyU) of Vibrio cholerae serotype O1 (strain ATCC 39315 / El Tor Inaba N16961).